A 275-amino-acid chain; its full sequence is UPF0758 protein RL2068 (275 aa).

Residues 1–45 (MAKGPVSTSSDDELPFETQEPIAADERSFFGGQPQKPSAPNARAA) are disordered. Positions 153–275 (VLSSWSSVIQ…HVSLKGLKLI (123 aa)) constitute an MPN domain. Zn(2+) contacts are provided by histidine 224, histidine 226, and aspartate 237. The JAMM motif signature appears at 224 to 237 (HNHPSGDPTPSRAD).

The protein belongs to the UPF0758 family.

This chain is UPF0758 protein RL2068, found in Rhizobium johnstonii (strain DSM 114642 / LMG 32736 / 3841) (Rhizobium leguminosarum bv. viciae).